The chain runs to 1388 residues: Rho-associated protein kinase 2 (1388 aa).

The tract at residues 1–24 (MSRPPPTGKMPGAPEAVSGDGAGA) is disordered. Positions 92–354 (YDVVKVIGRG…VEEIKQHPFF (263 aa)) constitute a Protein kinase domain. ATP-binding positions include 98–106 (IGRGAFGEV) and Lys121. Residue Asp214 is the Proton acceptor of the active site. One can recognise an AGC-kinase C-terminal domain in the interval 357-425 (DQWNWDNIRE…YRENLLLSDS (69 aa)). Residues 363–784 (NIRETAAPVV…INELLKQKDV (422 aa)) are interaction with PPP1R12A. The interval 373 to 420 (PELSSDIDSSNFDDIEDDKGDVETFPIPKAFVGNQLPFIGFTYYRENL) is interaction with NPM1. Thr414 carries the post-translational modification Phosphothreonine; by ROCK2. Residues 497-573 (ALRQLEREKA…LDETNALLRT (77 aa)) form the REM-1 domain. Over residues 512–530 (NAEYQRKADHEADKKRNLE) the composition is skewed to basic and acidic residues. Residues 512–532 (NAEYQRKADHEADKKRNLEND) are disordered. Tyr722 carries the phosphotyrosine; by SRC modification. Residues 979–1047 (TSDVANLANE…LAEIMNRKEP (69 aa)) enclose the RhoBD domain. The segment at 979 to 1047 (TSDVANLANE…LAEIMNRKEP (69 aa)) is RHOA binding. Residues 1054 to 1126 (TDMRRKEKEN…EQLRSQLQAL (73 aa)) adopt a coiled-coil conformation. Ser1137 bears the Phosphoserine mark. The region spanning 1150–1349 (ESRLEGWLSL…WVSRLVKKIP (200 aa)) is the PH domain. Residue Thr1212 is modified to Phosphothreonine. The Phorbol-ester/DAG-type zinc-finger motif lies at 1260-1315 (GHEFIPTLYHFPTNCEACMKPLWHMFKPPPALECRRCHIKCHKDHMDKKEEIIAPC). The tract at residues 1345–1388 (VKKIPKKPPAPDPFARSSPRTSMKIQQNQSIRRPSRQLAANKPS) is disordered. A phosphoserine mark is found at Ser1362 and Ser1374. The segment covering 1362–1376 (SPRTSMKIQQNQSIR) has biased composition (polar residues).

The protein belongs to the protein kinase superfamily. AGC Ser/Thr protein kinase family. In terms of assembly, homodimer. Interacts with IRS1. Interacts with RAF1. Interacts with RHOA (activated by GTP), RHOB and RHOC. Interacts with PPP1R12A. Interacts with EP300. Interacts with CHORDC1. Interacts with BRCA2. Interacts with NPM1; this interaction enhances ROCK2 activity. Interacts with SORL1. Interacts with PJVK. Mg(2+) is required as a cofactor. Post-translationally, autophosphorylated. Phosphorylation at Tyr-722 reduces its binding to RHOA and is crucial for focal adhesion dynamics. Dephosphorylation by PTPN11 stimulates its RHOA binding activity. In terms of processing, cleaved by granzyme B during apoptosis. This leads to constitutive activation of the kinase and membrane blebbing.

The protein localises to the cytoplasm. It localises to the cell membrane. It is found in the nucleus. Its subcellular location is the cytoskeleton. The protein resides in the microtubule organizing center. The protein localises to the centrosome. The catalysed reaction is L-seryl-[protein] + ATP = O-phospho-L-seryl-[protein] + ADP + H(+). The enzyme catalyses L-threonyl-[protein] + ATP = O-phospho-L-threonyl-[protein] + ADP + H(+). Its activity is regulated as follows. Activated by RHOA binding. Inhibited by Y-27632. Its function is as follows. Protein kinase which is a key regulator of actin cytoskeleton and cell polarity. Involved in regulation of smooth muscle contraction, actin cytoskeleton organization, stress fiber and focal adhesion formation, neurite retraction, cell adhesion and motility via phosphorylation of ADD1, BRCA2, CNN1, EZR, DPYSL2, EP300, MSN, MYL9/MLC2, NPM1, RDX, PPP1R12A and VIM. Phosphorylates SORL1 and IRF4. Acts as a negative regulator of VEGF-induced angiogenic endothelial cell activation. Positively regulates the activation of p42/MAPK1-p44/MAPK3 and of p90RSK/RPS6KA1 during myogenic differentiation. Plays an important role in the timely initiation of centrosome duplication. Inhibits keratinocyte terminal differentiation. May regulate closure of the eyelids and ventral body wall through organization of actomyosin bundles. Plays a critical role in the regulation of spine and synaptic properties in the hippocampus. Plays an important role in generating the circadian rhythm of the aortic myofilament Ca(2+) sensitivity and vascular contractility by modulating the myosin light chain phosphorylation. This is Rho-associated protein kinase 2 (ROCK2) from Sus scrofa (Pig).